The following is a 2924-amino-acid chain: Zinc finger ZZ-type and EF-hand domain-containing protein 1 (2924 aa).

The tract at residues 1-41 (MGNAPSNSSEDEAAAAGGEGWSPHQDWAADSGTTPGPGPAA) is disordered. Residue Gly2 is the site of N-myristoyl glycine attachment. The span at 28 to 41 (AADSGTTPGPGPAA) shows a compositional bias: low complexity. One can recognise an EF-hand domain in the interval 111-146 (CSGEQFEEAFAQFDAEGDGTVDAENMLEALKNSSGA). Positions 226 to 405 (LVQKEKESPG…AIWYWSLLTS (180 aa)) constitute a DOC domain. Phosphoserine is present on Ser240. The span at 1452–1470 (HLQPLDRRQRTSSVVEEHF) shows a compositional bias: basic and acidic residues. Positions 1452 to 1527 (HLQPLDRRQR…STPTRRPPFT (76 aa)) are disordered. The span at 1472-1485 (GSASPTEAATPAAG) shows a compositional bias: low complexity. Phosphoserine occurs at positions 1475, 1488, and 1509. A Phosphothreonine modification is found at Thr1510. A compositionally biased stretch (pro residues) spans 1514-1523 (PSPPSTPTRR). Phosphoserine is present on Ser1515. Thr1519 and Thr1521 each carry phosphothreonine. 2 positions are modified to phosphoserine: Ser1535 and Ser1538. 2 consecutive ZZ-type zinc fingers follow at residues 1776 to 1831 (NVDI…FTCD) and 1825 to 1880 (NMEF…MVTI). Zn(2+) contacts are provided by Cys1781, Cys1784, Cys1795, Cys1798, Cys1804, Cys1807, His1817, His1821, Cys1830, Cys1833, Cys1844, Cys1847, Cys1853, Cys1856, His1866, and His1870. Positions 2388–2418 (DLELDERGDQEEELDRPVSSPGEAEQKKLDP) are disordered. Position 2407 is a phosphoserine (Ser2407). Lys2630 carries the N6-acetyllysine modification.

Interacts with KLF6 and KLF9. Interacts via (ZZ-type 2 zinc finger) with histone H3 trimethylated at 'Lys-4' (H3K4me3) and histone H3 acetylated at 'Lys-4' (H3K4ac).

Its function is as follows. Histone H3 reader which may act as a transcriptional coactivator for KLF6 and KLF9 transcription factors. This is Zinc finger ZZ-type and EF-hand domain-containing protein 1 (Zzef1) from Mus musculus (Mouse).